Consider the following 510-residue polypeptide: ATP synthase subunit alpha, chloroplastic (510 aa).

170–177 lines the ATP pocket; it reads GDRQTGKT.

This sequence belongs to the ATPase alpha/beta chains family. In terms of assembly, F-type ATPases have 2 components, CF(1) - the catalytic core - and CF(0) - the membrane proton channel. CF(1) has five subunits: alpha(3), beta(3), gamma(1), delta(1), epsilon(1). CF(0) has four main subunits: a, b, b' and c.

It localises to the plastid. The protein localises to the chloroplast thylakoid membrane. The catalysed reaction is ATP + H2O + 4 H(+)(in) = ADP + phosphate + 5 H(+)(out). Functionally, produces ATP from ADP in the presence of a proton gradient across the membrane. The alpha chain is a regulatory subunit. The chain is ATP synthase subunit alpha, chloroplastic from Lotus japonicus (Lotus corniculatus var. japonicus).